A 353-amino-acid chain; its full sequence is 3-dehydroquinate synthase (353 aa).

NAD(+) contacts are provided by residues alanine 60–lysine 65, glycine 94–aspartate 98, threonine 118–threonine 119, lysine 131, and lysine 140. Zn(2+)-binding residues include glutamate 173, histidine 234, and histidine 253.

It belongs to the sugar phosphate cyclases superfamily. Dehydroquinate synthase family. The cofactor is NAD(+). Co(2+) serves as cofactor. Requires Zn(2+) as cofactor.

It localises to the cytoplasm. It carries out the reaction 7-phospho-2-dehydro-3-deoxy-D-arabino-heptonate = 3-dehydroquinate + phosphate. The protein operates within metabolic intermediate biosynthesis; chorismate biosynthesis; chorismate from D-erythrose 4-phosphate and phosphoenolpyruvate: step 2/7. In terms of biological role, catalyzes the conversion of 3-deoxy-D-arabino-heptulosonate 7-phosphate (DAHP) to dehydroquinate (DHQ). This chain is 3-dehydroquinate synthase, found in Parabacteroides distasonis (strain ATCC 8503 / DSM 20701 / CIP 104284 / JCM 5825 / NCTC 11152).